A 226-amino-acid chain; its full sequence is Orotidine 5'-phosphate decarboxylase (226 aa).

Substrate is bound by residues Asp8, Lys30, 58-67 (DLKIHDIPNT), Thr117, Arg177, Gln186, Gly206, and Arg207. Lys60 functions as the Proton donor in the catalytic mechanism.

The protein belongs to the OMP decarboxylase family. Type 1 subfamily. As to quaternary structure, homodimer.

It catalyses the reaction orotidine 5'-phosphate + H(+) = UMP + CO2. It functions in the pathway pyrimidine metabolism; UMP biosynthesis via de novo pathway; UMP from orotate: step 2/2. In terms of biological role, catalyzes the decarboxylation of orotidine 5'-monophosphate (OMP) to uridine 5'-monophosphate (UMP). The protein is Orotidine 5'-phosphate decarboxylase of Campylobacter jejuni subsp. doylei (strain ATCC BAA-1458 / RM4099 / 269.97).